The following is a 123-amino-acid chain: Small ribosomal subunit protein uS13 (123 aa).

The tract at residues 95 to 123 is disordered; it reads GLPVRGQKTKTNARTRKGPKRTVGRKKKK. A compositionally biased stretch (basic residues) spans 101–123; that stretch reads QKTKTNARTRKGPKRTVGRKKKK.

The protein belongs to the universal ribosomal protein uS13 family. Part of the 30S ribosomal subunit. Forms a loose heterodimer with protein S19. Forms two bridges to the 50S subunit in the 70S ribosome.

Functionally, located at the top of the head of the 30S subunit, it contacts several helices of the 16S rRNA. In the 70S ribosome it contacts the 23S rRNA (bridge B1a) and protein L5 of the 50S subunit (bridge B1b), connecting the 2 subunits; these bridges are implicated in subunit movement. Contacts the tRNAs in the A and P-sites. This Alkaliphilus metalliredigens (strain QYMF) protein is Small ribosomal subunit protein uS13.